A 125-amino-acid chain; its full sequence is Small ribosomal subunit protein uS13 (125 aa).

Positions 92–125 (RRSLPARGQNTQTNARTRKGRRKTVAGKKKAVKK) are disordered. Basic residues predominate over residues 107–125 (RTRKGRRKTVAGKKKAVKK).

Belongs to the universal ribosomal protein uS13 family. Part of the 30S ribosomal subunit. Forms a loose heterodimer with protein S19. Forms two bridges to the 50S subunit in the 70S ribosome.

Its function is as follows. Located at the top of the head of the 30S subunit, it contacts several helices of the 16S rRNA. In the 70S ribosome it contacts the 23S rRNA (bridge B1a) and protein L5 of the 50S subunit (bridge B1b), connecting the 2 subunits; these bridges are implicated in subunit movement. Contacts the tRNAs in the A and P-sites. The protein is Small ribosomal subunit protein uS13 of Chlorobium phaeobacteroides (strain BS1).